A 616-amino-acid chain; its full sequence is Elongation factor 4 (616 aa).

One can recognise a tr-type G domain in the interval 17–203; sequence ERIRNFCIIA…RVCELVPAPV (187 aa). Residues 29–34 and 150–153 contribute to the GTP site; these read DHGKST and NKID.

This sequence belongs to the TRAFAC class translation factor GTPase superfamily. Classic translation factor GTPase family. LepA subfamily.

The protein resides in the cell membrane. The enzyme catalyses GTP + H2O = GDP + phosphate + H(+). Functionally, required for accurate and efficient protein synthesis under certain stress conditions. May act as a fidelity factor of the translation reaction, by catalyzing a one-codon backward translocation of tRNAs on improperly translocated ribosomes. Back-translocation proceeds from a post-translocation (POST) complex to a pre-translocation (PRE) complex, thus giving elongation factor G a second chance to translocate the tRNAs correctly. Binds to ribosomes in a GTP-dependent manner. This is Elongation factor 4 from Corynebacterium jeikeium (strain K411).